We begin with the raw amino-acid sequence, 994 residues long: Protein translocase subunit SecA (994 aa).

ATP-binding positions include glutamine 85, 103–107 (GEGKT), and aspartate 492. Low complexity predominate over residues 868-888 (IPDGAGPVADAQPVRPAAARQ). The segment at 868-994 (IPDGAGPVAD…HGDPARRNTE (127 aa)) is disordered. Positions 889 to 900 (TPPPPSPVPSAP) are enriched in pro residues. Zn(2+) is bound by residues cysteine 973, cysteine 975, cysteine 984, and histidine 985. Basic and acidic residues predominate over residues 984–994 (CHGDPARRNTE).

Belongs to the SecA family. Monomer and homodimer. Part of the essential Sec protein translocation apparatus which comprises SecA, SecYEG and auxiliary proteins SecDF. Other proteins may also be involved. Zn(2+) serves as cofactor.

The protein resides in the cell membrane. Its subcellular location is the cytoplasm. The catalysed reaction is ATP + H2O + cellular proteinSide 1 = ADP + phosphate + cellular proteinSide 2.. Part of the Sec protein translocase complex. Interacts with the SecYEG preprotein conducting channel. Has a central role in coupling the hydrolysis of ATP to the transfer of proteins into and across the cell membrane, serving as an ATP-driven molecular motor driving the stepwise translocation of polypeptide chains across the membrane. This is Protein translocase subunit SecA from Frankia casuarinae (strain DSM 45818 / CECT 9043 / HFP020203 / CcI3).